The sequence spans 221 residues: Ependymin (221 aa).

An N-terminal signal peptide occupies residues M1–A21. Residues N37, N77, and N101 are each glycosylated (N-linked (GlcNAc...) asparagine).

This sequence belongs to the ependymin family. Forms disulfide-linked dimers. In terms of processing, binds calcium through the terminal sialic acids. As to expression, EPDs are synthesized in the meninx and secreted in the cerebrospinal fluid.

Its subcellular location is the secreted. Functionally, may play a role in neural plasticity. May be involved during axon regeneration. The protein is Ependymin (epd) of Esox lucius (Northern pike).